The following is a 56-amino-acid chain: Potassium channel toxin alpha-KTx 9.1 (56 aa).

An N-terminal signal peptide occupies residues 1-28 (MSRLFTLVLIVLAMNVMMAIISDPVVEA). Disulfide bonds link Cys31-Cys47, Cys34-Cys52, and Cys38-Cys54.

Expressed by the venom gland.

The protein localises to the secreted. Its function is as follows. Blocks small conductance calcium-activated potassium channels (KCNN, SK). Weakly inhibits the Kv7.1/KCNQ1 channel (10 uM of the toxin inhibits currents by 23.3%). Low toxicity by intracerebroventricular injection into mice. This chain is Potassium channel toxin alpha-KTx 9.1, found in Olivierus martensii (Manchurian scorpion).